Here is a 738-residue protein sequence, read N- to C-terminus: 1,4-alpha-glucan branching enzyme GlgB (738 aa).

Catalysis depends on Asp-417, which acts as the Nucleophile. Catalysis depends on Glu-472, which acts as the Proton donor.

It belongs to the glycosyl hydrolase 13 family. GlgB subfamily. In terms of assembly, monomer.

It catalyses the reaction Transfers a segment of a (1-&gt;4)-alpha-D-glucan chain to a primary hydroxy group in a similar glucan chain.. It functions in the pathway glycan biosynthesis; glycogen biosynthesis. In terms of biological role, catalyzes the formation of the alpha-1,6-glucosidic linkages in glycogen by scission of a 1,4-alpha-linked oligosaccharide from growing alpha-1,4-glucan chains and the subsequent attachment of the oligosaccharide to the alpha-1,6 position. In Burkholderia pseudomallei (strain 668), this protein is 1,4-alpha-glucan branching enzyme GlgB.